We begin with the raw amino-acid sequence, 375 residues long: Beta sliding clamp (375 aa).

Belongs to the beta sliding clamp family. As to quaternary structure, forms a ring-shaped head-to-tail homodimer around DNA which binds and tethers DNA polymerases and other proteins to the DNA. The DNA replisome complex has a single clamp-loading complex (3 tau and 1 each of delta, delta', psi and chi subunits) which binds 3 Pol III cores (1 core on the leading strand and 2 on the lagging strand) each with a beta sliding clamp dimer. Additional proteins in the replisome are other copies of gamma, psi and chi, Ssb, DNA helicase and RNA primase.

It is found in the cytoplasm. Its function is as follows. Confers DNA tethering and processivity to DNA polymerases and other proteins. Acts as a clamp, forming a ring around DNA (a reaction catalyzed by the clamp-loading complex) which diffuses in an ATP-independent manner freely and bidirectionally along dsDNA. Initially characterized for its ability to contact the catalytic subunit of DNA polymerase III (Pol III), a complex, multichain enzyme responsible for most of the replicative synthesis in bacteria; Pol III exhibits 3'-5' exonuclease proofreading activity. The beta chain is required for initiation of replication as well as for processivity of DNA replication. The protein is Beta sliding clamp (dnaN) of Mycoplasma capricolum subsp. capricolum (strain California kid / ATCC 27343 / NCTC 10154).